A 178-amino-acid chain; its full sequence is Large ribosomal subunit protein uL6 (178 aa).

Belongs to the universal ribosomal protein uL6 family. Part of the 50S ribosomal subunit.

This protein binds to the 23S rRNA, and is important in its secondary structure. It is located near the subunit interface in the base of the L7/L12 stalk, and near the tRNA binding site of the peptidyltransferase center. This is Large ribosomal subunit protein uL6 from Halalkalibacterium halodurans (strain ATCC BAA-125 / DSM 18197 / FERM 7344 / JCM 9153 / C-125) (Bacillus halodurans).